Consider the following 445-residue polypeptide: Probable aminotransferase TAT3 (445 aa).

This sequence belongs to the class-I pyridoxal-phosphate-dependent aminotransferase family. Pyridoxal 5'-phosphate serves as cofactor. Expressed in roots, leaves and cauline leaves.

The sequence is that of Probable aminotransferase TAT3 (TAT3) from Arabidopsis thaliana (Mouse-ear cress).